Here is a 362-residue protein sequence, read N- to C-terminus: Peptide chain release factor 1 (362 aa).

Gln240 bears the N5-methylglutamine mark.

The protein belongs to the prokaryotic/mitochondrial release factor family. In terms of processing, methylated by PrmC. Methylation increases the termination efficiency of RF1.

The protein localises to the cytoplasm. Functionally, peptide chain release factor 1 directs the termination of translation in response to the peptide chain termination codons UAG and UAA. This is Peptide chain release factor 1 from Bifidobacterium longum (strain DJO10A).